A 154-amino-acid polypeptide reads, in one-letter code: Large ribosomal subunit protein uL13 (154 aa).

The protein belongs to the universal ribosomal protein uL13 family. As to quaternary structure, part of the 50S ribosomal subunit.

In terms of biological role, this protein is one of the early assembly proteins of the 50S ribosomal subunit, although it is not seen to bind rRNA by itself. It is important during the early stages of 50S assembly. The protein is Large ribosomal subunit protein uL13 of Rhodopseudomonas palustris (strain BisB5).